The primary structure comprises 166 residues: Putative 4-hydroxy-4-methyl-2-oxoglutarate aldolase (166 aa).

Substrate contacts are provided by residues 81 to 84 (GDII) and arginine 103. Aspartate 104 contributes to the a divalent metal cation binding site.

The protein belongs to the class II aldolase/RraA-like family. In terms of assembly, homotrimer. The cofactor is a divalent metal cation.

It catalyses the reaction 4-hydroxy-4-methyl-2-oxoglutarate = 2 pyruvate. It carries out the reaction oxaloacetate + H(+) = pyruvate + CO2. Its function is as follows. Catalyzes the aldol cleavage of 4-hydroxy-4-methyl-2-oxoglutarate (HMG) into 2 molecules of pyruvate. Also contains a secondary oxaloacetate (OAA) decarboxylase activity due to the common pyruvate enolate transition state formed following C-C bond cleavage in the retro-aldol and decarboxylation reactions. The sequence is that of Putative 4-hydroxy-4-methyl-2-oxoglutarate aldolase from Corynebacterium glutamicum (strain ATCC 13032 / DSM 20300 / JCM 1318 / BCRC 11384 / CCUG 27702 / LMG 3730 / NBRC 12168 / NCIMB 10025 / NRRL B-2784 / 534).